The primary structure comprises 210 residues: Pyridoxine/pyridoxamine 5'-phosphate oxidase (210 aa).

Residues 7 to 10 (REDY) and lysine 65 each bind substrate. FMN-binding positions include 60-65 (RMVLLK), 75-76 (FT), arginine 81, lysine 82, and glutamine 104. Substrate-binding residues include tyrosine 122, arginine 126, and serine 130. FMN-binding positions include 139-140 (QS) and tryptophan 183. 189–191 (RLH) is a substrate binding site. Position 193 (arginine 193) interacts with FMN.

The protein belongs to the pyridoxamine 5'-phosphate oxidase family. As to quaternary structure, homodimer. It depends on FMN as a cofactor.

The catalysed reaction is pyridoxamine 5'-phosphate + O2 + H2O = pyridoxal 5'-phosphate + H2O2 + NH4(+). The enzyme catalyses pyridoxine 5'-phosphate + O2 = pyridoxal 5'-phosphate + H2O2. It functions in the pathway cofactor metabolism; pyridoxal 5'-phosphate salvage; pyridoxal 5'-phosphate from pyridoxamine 5'-phosphate: step 1/1. Its pathway is cofactor metabolism; pyridoxal 5'-phosphate salvage; pyridoxal 5'-phosphate from pyridoxine 5'-phosphate: step 1/1. Catalyzes the oxidation of either pyridoxine 5'-phosphate (PNP) or pyridoxamine 5'-phosphate (PMP) into pyridoxal 5'-phosphate (PLP). The polypeptide is Pyridoxine/pyridoxamine 5'-phosphate oxidase (Neisseria meningitidis serogroup A / serotype 4A (strain DSM 15465 / Z2491)).